Reading from the N-terminus, the 385-residue chain is GDP-D-glucose phosphorylase 1 (385 aa).

His218 acts as the Tele-GMP-histidine intermediate in catalysis.

Belongs to the GDPGP1 family.

It localises to the cytoplasm. It carries out the reaction GDP-alpha-D-glucose + phosphate = alpha-D-glucose 1-phosphate + GDP + H(+). Specific and highly efficient GDP-D-glucose phosphorylase regulating the levels of GDP-D-glucose in cells. In Homo sapiens (Human), this protein is GDP-D-glucose phosphorylase 1 (GDPGP1).